Here is a 281-residue protein sequence, read N- to C-terminus: Probable endonuclease 4 (281 aa).

Positions 69, 109, 145, 179, 182, 216, 229, 231, and 261 each coordinate Zn(2+).

It belongs to the AP endonuclease 2 family. Zn(2+) serves as cofactor.

It catalyses the reaction Endonucleolytic cleavage to 5'-phosphooligonucleotide end-products.. Its function is as follows. Endonuclease IV plays a role in DNA repair. It cleaves phosphodiester bonds at apurinic or apyrimidinic (AP) sites, generating a 3'-hydroxyl group and a 5'-terminal sugar phosphate. The protein is Probable endonuclease 4 of Buchnera aphidicola subsp. Acyrthosiphon pisum (strain APS) (Acyrthosiphon pisum symbiotic bacterium).